Reading from the N-terminus, the 217-residue chain is Probable GTP-binding protein EngB (217 aa).

Residues 29–213 enclose the EngB-type G domain; it reads GPLEVAFAGR…RQAIGETVGV (185 aa). Residues 37–44, 64–68, 91–94, 158–161, and 192–194 each bind GTP; these read GRSNVGKS, GRTQE, DMPG, TKTD, and TSS. Residues Ser44 and Thr66 each contribute to the Mg(2+) site.

It belongs to the TRAFAC class TrmE-Era-EngA-EngB-Septin-like GTPase superfamily. EngB GTPase family. Mg(2+) serves as cofactor.

Its function is as follows. Necessary for normal cell division and for the maintenance of normal septation. The protein is Probable GTP-binding protein EngB of Rhizobium leguminosarum bv. trifolii (strain WSM2304).